A 165-amino-acid polypeptide reads, in one-letter code: Nascent polypeptide-associated complex subunit beta (165 aa).

2 disordered regions span residues 1–34 and 133–165; these read MDQA…TSGA and QNMQ…KSVD. The span at 20-30 shows a compositional bias: basic residues; the sequence is TPRRKVKKVHK. The 78-residue stretch at 33-110 folds into the NAC-A/B domain; the sequence is GADDKKLQAT…GEEKELTELV (78 aa). Over residues 145 to 158 the composition is skewed to acidic residues; that stretch reads DDDEDDIPDLVEGE.

The protein belongs to the NAC-beta family. As to quaternary structure, part of the nascent polypeptide-associated complex (NAC), consisting of egd2 and egd1. NAC associates with ribosomes via egd1.

The protein localises to the cytoplasm. The protein resides in the nucleus. In terms of biological role, component of the nascent polypeptide-associated complex (NAC), a dynamic component of the ribosomal exit tunnel, protecting the emerging polypeptides from interaction with other cytoplasmic proteins to ensure appropriate nascent protein targeting. The NAC complex also promotes mitochondrial protein import by enhancing productive ribosome interactions with the outer mitochondrial membrane and blocks the inappropriate interaction of ribosomes translating non-secretory nascent polypeptides with translocation sites in the membrane of the endoplasmic reticulum. EGD1 may act as a transcription factor that exert a negative effect on the expression of several genes that are transcribed by RNA polymerase II. The protein is Nascent polypeptide-associated complex subunit beta (egd1) of Emericella nidulans (strain FGSC A4 / ATCC 38163 / CBS 112.46 / NRRL 194 / M139) (Aspergillus nidulans).